Here is a 459-residue protein sequence, read N- to C-terminus: Cysteine--tRNA ligase (459 aa).

C28 contributes to the Zn(2+) binding site. The 'HIGH' region signature appears at 30-40 (VTVYDLCHIGH). C209, H234, and E238 together coordinate Zn(2+). A 'KMSKS' region motif is present at residues 266–270 (KMSKS). K269 serves as a coordination point for ATP.

This sequence belongs to the class-I aminoacyl-tRNA synthetase family. Monomer. It depends on Zn(2+) as a cofactor.

Its subcellular location is the cytoplasm. The enzyme catalyses tRNA(Cys) + L-cysteine + ATP = L-cysteinyl-tRNA(Cys) + AMP + diphosphate. The sequence is that of Cysteine--tRNA ligase from Histophilus somni (strain 2336) (Haemophilus somnus).